The primary structure comprises 151 residues: Deoxyuridine 5'-triphosphate nucleotidohydrolase (151 aa).

Substrate contacts are provided by residues 70-72 (RSG), asparagine 83, 87-89 (LID), and methionine 97.

It belongs to the dUTPase family. Mg(2+) serves as cofactor.

The catalysed reaction is dUTP + H2O = dUMP + diphosphate + H(+). The protein operates within pyrimidine metabolism; dUMP biosynthesis; dUMP from dCTP (dUTP route): step 2/2. Functionally, this enzyme is involved in nucleotide metabolism: it produces dUMP, the immediate precursor of thymidine nucleotides and it decreases the intracellular concentration of dUTP so that uracil cannot be incorporated into DNA. This chain is Deoxyuridine 5'-triphosphate nucleotidohydrolase, found in Hamiltonella defensa subsp. Acyrthosiphon pisum (strain 5AT).